Reading from the N-terminus, the 143-residue chain is Small ribosomal subunit protein bS6 (143 aa).

Positions 95 to 143 (GPDTEQSFIMKSKDDKGDKPERRRRDDDENGDVGVSNDSDNDGGNAEAA) are disordered. The span at 105–121 (KSKDDKGDKPERRRRDD) shows a compositional bias: basic and acidic residues.

It belongs to the bacterial ribosomal protein bS6 family.

Binds together with bS18 to 16S ribosomal RNA. The chain is Small ribosomal subunit protein bS6 from Xylella fastidiosa (strain M23).